A 271-amino-acid chain; its full sequence is Phthiotriol/phenolphthiotriol dimycocerosates methyltransferase 1 (271 aa).

The protein belongs to the methyltransferase superfamily. Phthiotriol/phenolphthiotriol dimycocerosates methyltransferase family.

Functionally, catalyzes the methylation of the lipid moiety of the intermediate compounds phthiotriol and glycosylated phenolphthiotriol dimycoserosates to form phthiocerol dimycocerosates (DIM A) and glycosylated phenolphthiocerol dimycocerosates (PGL). In Mycobacterium ulcerans (strain Agy99), this protein is Phthiotriol/phenolphthiotriol dimycocerosates methyltransferase 1.